A 403-amino-acid polypeptide reads, in one-letter code: Probable tRNA sulfurtransferase (403 aa).

Residues 60 to 165 (QLAEERLKPI…KEGVFLSCRT (106 aa)) enclose the THUMP domain. Residues 183 to 184 (ML), 208 to 209 (HF), arginine 265, glycine 287, and glutamine 296 each bind ATP.

The protein belongs to the ThiI family.

The protein localises to the cytoplasm. The enzyme catalyses [ThiI sulfur-carrier protein]-S-sulfanyl-L-cysteine + a uridine in tRNA + 2 reduced [2Fe-2S]-[ferredoxin] + ATP + H(+) = [ThiI sulfur-carrier protein]-L-cysteine + a 4-thiouridine in tRNA + 2 oxidized [2Fe-2S]-[ferredoxin] + AMP + diphosphate. It carries out the reaction [ThiS sulfur-carrier protein]-C-terminal Gly-Gly-AMP + S-sulfanyl-L-cysteinyl-[cysteine desulfurase] + AH2 = [ThiS sulfur-carrier protein]-C-terminal-Gly-aminoethanethioate + L-cysteinyl-[cysteine desulfurase] + A + AMP + 2 H(+). It participates in cofactor biosynthesis; thiamine diphosphate biosynthesis. In terms of biological role, catalyzes the ATP-dependent transfer of a sulfur to tRNA to produce 4-thiouridine in position 8 of tRNAs, which functions as a near-UV photosensor. Also catalyzes the transfer of sulfur to the sulfur carrier protein ThiS, forming ThiS-thiocarboxylate. This is a step in the synthesis of thiazole, in the thiamine biosynthesis pathway. The sulfur is donated as persulfide by IscS. This chain is Probable tRNA sulfurtransferase, found in Listeria monocytogenes serotype 4a (strain HCC23).